We begin with the raw amino-acid sequence, 151 residues long: Single-stranded DNA-binding protein, mitochondrial (151 aa).

The N-terminal 16 residues, 1–16, are a transit peptide targeting the mitochondrion; sequence MFRRPVLQVFRQFVRQ. Positions 30 to 141 constitute an SSB domain; it reads LNRVQLLGRV…IIADNIIFLS (112 aa). Phosphoserine occurs at positions 67 and 79. Lysine 113 bears the N6-acetyllysine mark. At lysine 122 the chain carries N6-succinyllysine.

Homotetramer. Interacts with MPG/AAG, through inhibition of its glycosylase activity it potentially prevents formation of DNA breaks in ssDNA, ensuring that base removal primarily occurs in dsDNA. Interacts with POLDIP2. Interacts with PRIMPOL.

It localises to the mitochondrion. It is found in the mitochondrion matrix. The protein localises to the mitochondrion nucleoid. Functionally, binds preferentially and cooperatively to pyrimidine rich single-stranded DNA (ss-DNA). In vitro, required to maintain the copy number of mitochondrial DNA (mtDNA) and plays a crucial role during mtDNA replication by stimulating the activity of the replisome components POLG and TWNK at the replication fork. Promotes the activity of the gamma complex polymerase POLG, largely by organizing the template DNA and eliminating secondary structures to favor ss-DNA conformations that facilitate POLG activity. In addition it is able to promote the 5'-3' unwinding activity of the mtDNA helicase TWNK. May also function in mtDNA repair. The polypeptide is Single-stranded DNA-binding protein, mitochondrial (Ssbp1) (Rattus norvegicus (Rat)).